A 119-amino-acid polypeptide reads, in one-letter code: Urotensin-2B (119 aa).

An N-terminal signal peptide occupies residues 1–28 (MNKILSSTVCFGLLTLLSVLSFLQSVHG). The propeptide occupies 29–109 (RPYLTQGNEI…VDGLFSSHPS (81 aa)). An intrachain disulfide couples Cys113 to Cys118.

Belongs to the urotensin-2 family.

The protein localises to the secreted. Functionally, potent vasoconstrictor. In Homo sapiens (Human), this protein is Urotensin-2B (UTS2B).